A 210-amino-acid chain; its full sequence is Proteasome subunit beta (210 aa).

The propeptide at 1–9 is removed in mature form; by autocatalysis; the sequence is MNDKNTLKG. Threonine 10 acts as the Nucleophile in catalysis.

The protein belongs to the peptidase T1B family. The 20S proteasome core is composed of 14 alpha and 14 beta subunits that assemble into four stacked heptameric rings, resulting in a barrel-shaped structure. The two inner rings, each composed of seven catalytic beta subunits, are sandwiched by two outer rings, each composed of seven alpha subunits. The catalytic chamber with the active sites is on the inside of the barrel. Has a gated structure, the ends of the cylinder being occluded by the N-termini of the alpha-subunits. Is capped at one or both ends by the proteasome regulatory ATPase, PAN.

The protein localises to the cytoplasm. The enzyme catalyses Cleavage of peptide bonds with very broad specificity.. Its activity is regulated as follows. The formation of the proteasomal ATPase PAN-20S proteasome complex, via the docking of the C-termini of PAN into the intersubunit pockets in the alpha-rings, triggers opening of the gate for substrate entry. Interconversion between the open-gate and close-gate conformations leads to a dynamic regulation of the 20S proteasome proteolysis activity. Component of the proteasome core, a large protease complex with broad specificity involved in protein degradation. The polypeptide is Proteasome subunit beta (Methanothermobacter thermautotrophicus (strain ATCC 29096 / DSM 1053 / JCM 10044 / NBRC 100330 / Delta H) (Methanobacterium thermoautotrophicum)).